We begin with the raw amino-acid sequence, 151 residues long: UPF0178 protein Suden_0449 (151 aa).

This sequence belongs to the UPF0178 family.

The protein is UPF0178 protein Suden_0449 of Sulfurimonas denitrificans (strain ATCC 33889 / DSM 1251) (Thiomicrospira denitrificans (strain ATCC 33889 / DSM 1251)).